We begin with the raw amino-acid sequence, 62 residues long: MPRKAKVAKDLMYYPKWKSRKKNRCPICGRPRAFIRYFNMCRICFREHALRGDLPGVRKASW.

C25, C28, C41, and C44 together coordinate Zn(2+).

It belongs to the universal ribosomal protein uS14 family. Zinc-binding uS14 subfamily. As to quaternary structure, part of the 30S ribosomal subunit. Contacts proteins S3 and S10. Requires Zn(2+) as cofactor.

Its function is as follows. Binds 16S rRNA, required for the assembly of 30S particles and may also be responsible for determining the conformation of the 16S rRNA at the A site. The chain is Small ribosomal subunit protein uS14 from Aquifex aeolicus (strain VF5).